The chain runs to 342 residues: Aromatic amino acid aminotransferase (342 aa).

At Lys214 the chain carries N6-(pyridoxal phosphate)lysine.

The protein belongs to the class-II pyridoxal-phosphate-dependent aminotransferase family. As to quaternary structure, homodimer. Pyridoxal 5'-phosphate serves as cofactor.

The catalysed reaction is an aromatic L-alpha-amino acid + 2-oxoglutarate = an aromatic oxo-acid + L-glutamate. Functionally, aminotransferase that catalyzes the conversion of aromatic amino acids and 2-oxoglutarate into corresponding aromatic oxo acids and L-glutamate. This is Aromatic amino acid aminotransferase from Corynebacterium efficiens (strain DSM 44549 / YS-314 / AJ 12310 / JCM 11189 / NBRC 100395).